The following is a 644-amino-acid chain: DNA mismatch repair protein MutL (644 aa).

2 disordered regions span residues 353–399 (SESG…SQLT) and 420–440 (GSMAVPRESRSGPTGESRARA). Residues 370–381 (SPESKTHSTWNE) are compositionally biased toward polar residues. Residues 383–399 (SRVDTSRVEISRDSQLT) show a composition bias toward basic and acidic residues.

It belongs to the DNA mismatch repair MutL/HexB family.

In terms of biological role, this protein is involved in the repair of mismatches in DNA. It is required for dam-dependent methyl-directed DNA mismatch repair. May act as a 'molecular matchmaker', a protein that promotes the formation of a stable complex between two or more DNA-binding proteins in an ATP-dependent manner without itself being part of a final effector complex. This Shewanella sp. (strain MR-4) protein is DNA mismatch repair protein MutL.